The following is a 715-amino-acid chain: Methylmalonyl-CoA mutase large subunit (715 aa).

(R)-methylmalonyl-CoA-binding residues include Tyr70, Met73, Arg77, Thr80, Arg82, Tyr84, and Ser109. Phe112 and Ala134 together coordinate cob(II)alamin. The (R)-methylmalonyl-CoA site is built by Thr190 and Gln192. Val201 and Arg202 together coordinate cob(II)alamin. Residues Arg202, His239, Arg278, and Ser280 each contribute to the (R)-methylmalonyl-CoA site. Cob(II)alamin-binding residues include Gly328, Glu365, Ala368, Gly599, His600, Asp601, Arg602, Ser645, Leu647, Gly676, and Thr699. Residues Gln587 to Glu715 form the B12-binding domain.

It belongs to the methylmalonyl-CoA mutase family. Heterodimer of an alpha and a beta chain. It depends on adenosylcob(III)alamin as a cofactor.

The enzyme catalyses (R)-methylmalonyl-CoA = succinyl-CoA. Its function is as follows. Catalyzes the isomerization of succinyl-CoA to methylmalonyl-CoA during synthesis of propionate from tricarboxylic acid-cycle intermediates. This Porphyromonas gingivalis (strain ATCC BAA-308 / W83) protein is Methylmalonyl-CoA mutase large subunit (mutB).